We begin with the raw amino-acid sequence, 209 residues long: B3 domain-containing protein At2g31420 (209 aa).

The TF-B3 DNA-binding region spans 101–198 (LSKLEKSDFL…KLCFALSSPT (98 aa)).

The protein resides in the nucleus. The polypeptide is B3 domain-containing protein At2g31420 (Arabidopsis thaliana (Mouse-ear cress)).